The following is a 584-amino-acid chain: MFS-type transporter gkaD (584 aa).

Low complexity predominate over residues 1-11 (MAVDTETTTTT). The tract at residues 1–60 (MAVDTETTTTTIPVTDSDRIDDQNNLTSNAIPHASEKTVPDSPASEQNEVSDESEDKPSK) is disordered. Asparagine 25 carries N-linked (GlcNAc...) asparagine glycosylation. The next 8 membrane-spanning stretches (helical) occupy residues 65–85 (FGFYAIIVALALTSLLTSLEA), 99–119 (LGGASLYVWVVNGYYLTQTAF), 134–154 (WPMICSAAMFTIGSGVAGGSK), 167–187 (GIGSGGILVLTEIIICDLLPL), 196–216 (MIVSLVGIGAALGPLFGGLIV), 223–243 (WVFYLNVPIGGVACLMLFFFL), 262–282 (WIGNVLFVMSMVSILIALSWA), and 293–313 (VVVPLVLGFVGSAAFVVYEGS). Residue asparagine 328 is glycosylated (N-linked (GlcNAc...) asparagine). Helical transmembrane passes span 334 to 354 (AFAVTFLHTLSSVSVMYFLPV), 369 to 389 (VQLLPTILFMIPGAIAGGTLL), 398 to 418 (LQHGGLAFMIIGFGLLTLLDA), 425 to 445 (WVGYQLLGALGTGLALPVLLP), 462 to 482 (TWSFMRTYGFIWGATIATAVF), and 536 to 556 (LNVVWYVSLAFAGLGFLLVFL).

It belongs to the major facilitator superfamily.

The protein resides in the membrane. In terms of biological role, MFS-type transporter; part of the gene cluster that mediates the biosynthesis of GKK1032, fungal natural products containing a macrocyclic para-cyclophane connected to a decahydrofluorene ring system that show potent antitumor activities. In Penicillium citrinum, this protein is MFS-type transporter gkaD.